Reading from the N-terminus, the 361-residue chain is Phospho-N-acetylmuramoyl-pentapeptide-transferase (361 aa).

A run of 10 helical transmembrane segments spans residues 28 to 48, 74 to 94, 99 to 119, 133 to 153, 168 to 188, 203 to 223, 236 to 256, 263 to 283, 288 to 308, and 338 to 358; these read LAII…IKFL, TMGG…LADL, IWIT…DDYA, SKLV…EYLD, LNLD…VGSS, VPIA…GNLI, TGEL…FLWF, VFMG…ISVI, IVLA…ILQV, and KVVI…LSSL.

It belongs to the glycosyltransferase 4 family. MraY subfamily. The cofactor is Mg(2+).

The protein localises to the cell inner membrane. The catalysed reaction is UDP-N-acetyl-alpha-D-muramoyl-L-alanyl-gamma-D-glutamyl-meso-2,6-diaminopimeloyl-D-alanyl-D-alanine + di-trans,octa-cis-undecaprenyl phosphate = di-trans,octa-cis-undecaprenyl diphospho-N-acetyl-alpha-D-muramoyl-L-alanyl-D-glutamyl-meso-2,6-diaminopimeloyl-D-alanyl-D-alanine + UMP. Its pathway is cell wall biogenesis; peptidoglycan biosynthesis. Functionally, catalyzes the initial step of the lipid cycle reactions in the biosynthesis of the cell wall peptidoglycan: transfers peptidoglycan precursor phospho-MurNAc-pentapeptide from UDP-MurNAc-pentapeptide onto the lipid carrier undecaprenyl phosphate, yielding undecaprenyl-pyrophosphoryl-MurNAc-pentapeptide, known as lipid I. The polypeptide is Phospho-N-acetylmuramoyl-pentapeptide-transferase (Rickettsia akari (strain Hartford)).